A 336-amino-acid polypeptide reads, in one-letter code: N6-methyladenosine RNA methyltransferase MTA1 (336 aa).

Residues 61-83 form a disordered region; that stretch reads LISSEPPHLPFKTPEPKAGSGGL.

It belongs to the MT-A70-like family.

The enzyme catalyses an adenosine in mRNA + S-adenosyl-L-methionine = an N(6)-methyladenosine in mRNA + S-adenosyl-L-homocysteine + H(+). Its function is as follows. N6-methyladenosine RNA methyltransferase that plays a crucial role in fungal phenotypic traits, virulence, and stress tolerance. Mediates the methylation of mRNAs to produce N6-methyladenosine (m6A)-containing mRNAs. M6A is a modification present at internal sites of mRNAs and some non-coding RNAs and plays a role in mRNA stability and processing. Mediates specifically acid phosphatase APHA mRNA stability through a YTHDF1-dependent m6A modification of the A1306, A1341, and A1666 key methylation modification sites. Also mediates the stability of the transcription factor ZAP1 mRNA via modification of residue A1935 localized in the 3'UTR. This is N6-methyladenosine RNA methyltransferase MTA1 from Cryphonectria parasitica (strain ATCC 38755 / EP155).